The following is a 127-amino-acid chain: Large ribosomal subunit protein bL12 (127 aa).

It belongs to the bacterial ribosomal protein bL12 family. As to quaternary structure, homodimer. Part of the ribosomal stalk of the 50S ribosomal subunit. Forms a multimeric L10(L12)X complex, where L10 forms an elongated spine to which 2 to 4 L12 dimers bind in a sequential fashion. Binds GTP-bound translation factors.

Its function is as follows. Forms part of the ribosomal stalk which helps the ribosome interact with GTP-bound translation factors. Is thus essential for accurate translation. The chain is Large ribosomal subunit protein bL12 from Bordetella bronchiseptica (strain ATCC BAA-588 / NCTC 13252 / RB50) (Alcaligenes bronchisepticus).